The following is a 462-amino-acid chain: uncharacterized protein (462 aa).

WD repeat units follow at residues 170 to 209, 212 to 260, 263 to 302, 305 to 344, 347 to 386, 389 to 430, and 433 to 462; these read GGERPIAIVRFSNNGNHFASGSWGGQVKVWNSDNLSEVQL, GHTD…PLLR, GHLARVGRVAFHPSGDYLVSASFDTTWRLWDVHTGVELLM, GHSEGIFSIACQPDGSLVSSGGNDAIGRIWDLRSGKSIMV, EHIRQIVAMAWSPNGYQLATSSADDTVKIWDLRKVSLAHT, AHSS…LIKS, and GHEEKVMSVDGYGDRFISSGYDRTIKLWYP.

Its subcellular location is the cytoplasm. This is an uncharacterized protein from Schizosaccharomyces pombe (strain 972 / ATCC 24843) (Fission yeast).